A 270-amino-acid chain; its full sequence is Glucosamine-6-phosphate deaminase (270 aa).

Catalysis depends on Asp-72, which acts as the Proton acceptor; for enolization step. The For ring-opening step role is filled by Asp-141. His-143 (proton acceptor; for ring-opening step) is an active-site residue. Glu-148 serves as the catalytic For ring-opening step.

It belongs to the glucosamine/galactosamine-6-phosphate isomerase family. NagB subfamily.

It catalyses the reaction alpha-D-glucosamine 6-phosphate + H2O = beta-D-fructose 6-phosphate + NH4(+). It functions in the pathway amino-sugar metabolism; N-acetylneuraminate degradation; D-fructose 6-phosphate from N-acetylneuraminate: step 5/5. Allosterically activated by N-acetylglucosamine 6-phosphate (GlcNAc6P). Functionally, catalyzes the reversible isomerization-deamination of glucosamine 6-phosphate (GlcN6P) to form fructose 6-phosphate (Fru6P) and ammonium ion. This Parabacteroides distasonis (strain ATCC 8503 / DSM 20701 / CIP 104284 / JCM 5825 / NCTC 11152) protein is Glucosamine-6-phosphate deaminase.